Reading from the N-terminus, the 438-residue chain is Enolase (438 aa).

Gln174 provides a ligand contact to (2R)-2-phosphoglycerate. Glu216 serves as the catalytic Proton donor. Residues Asp253, Glu297, and Asp324 each contribute to the Mg(2+) site. The (2R)-2-phosphoglycerate site is built by Lys349, Arg378, Ser379, and Lys400. Catalysis depends on Lys349, which acts as the Proton acceptor.

Belongs to the enolase family. As to quaternary structure, component of the RNA degradosome, a multiprotein complex involved in RNA processing and mRNA degradation. Requires Mg(2+) as cofactor.

The protein resides in the cytoplasm. The protein localises to the secreted. Its subcellular location is the cell surface. The enzyme catalyses (2R)-2-phosphoglycerate = phosphoenolpyruvate + H2O. It functions in the pathway carbohydrate degradation; glycolysis; pyruvate from D-glyceraldehyde 3-phosphate: step 4/5. In terms of biological role, catalyzes the reversible conversion of 2-phosphoglycerate (2-PG) into phosphoenolpyruvate (PEP). It is essential for the degradation of carbohydrates via glycolysis. The chain is Enolase from Psychrobacter sp. (strain PRwf-1).